We begin with the raw amino-acid sequence, 340 residues long: MGELTAFLLPLIIVLMVKHSNSRTHSLRYFRLGVSDPIHGVPEFISVGYVDSHPITTYDSVTQQKEPRAPWMAENLAPDHWERYTQLLRGWQQMFKVELKRLQRHYNHSGSHTYQRMIGCELLEDGSTTGFLQYAYDGQDFLIFNKDTLSWLAVDNVAHTIKRAWEANQHELQYQKNWLEEECIAWLKRFLEYGKDTLQRTEPPLVRVNRKETFPGVTTLFCKAHGFYPPEIYMTWMKNGEEIVQEMDYGDILPSGDGTYQTWASVELDPQSSNLYSCHVEHCGVHVVLQVPQESEAIPLVMKAVSGSIVFVIVLAGVGVLVWRRRPREQNGAVYLPTPD.

An N-terminal signal peptide occupies residues 1–22; the sequence is MGELTAFLLPLIIVLMVKHSNS. The tract at residues 23 to 109 is alpha-1; that stretch reads RTHSLRYFRL…KRLQRHYNHS (87 aa). An antigen-binding cleft region spans residues 23 to 201; that stretch reads RTHSLRYFRL…EYGKDTLQRT (179 aa). Over 23-302 the chain is Extracellular; that stretch reads RTHSLRYFRL…QESEAIPLVM (280 aa). 8-(9H-purin-6-yl)-2-oxa-8-azabicyclo[3.3.1]nona-3,6-diene-4,6-dicarbaldehyde is bound by residues Y29 and R31. Positions 31, 46, and 65 each coordinate 5-(2-oxoethylideneamino)-6-(D-ribitylamino)uracil. R31, S46, and K65 together coordinate 5-(2-oxopropylideneamino)-6-(D-ribitylamino)uracil. Residues R31, S46, and K65 each contribute to the 7-hydroxy-6-methyl-8-(1-D-ribityl)lumazine site. K65 and H80 together coordinate 8-(9H-purin-6-yl)-2-oxa-8-azabicyclo[3.3.1]nona-3,6-diene-4,6-dicarbaldehyde. A 2-amino-4-oxopteridine-6-carbaldehyde-binding site is contributed by K65. Pyridoxal is bound at residue K65. N107 carries N-linked (GlcNAc...) asparagine glycosylation. The tract at residues 110-201 is alpha-2; it reads GSHTYQRMIG…EYGKDTLQRT (92 aa). Residue R116 participates in 8-(9H-purin-6-yl)-2-oxa-8-azabicyclo[3.3.1]nona-3,6-diene-4,6-dicarbaldehyde binding. R116, Y174, and Q175 together coordinate 5-(2-oxoethylideneamino)-6-(D-ribitylamino)uracil. The 5-(2-oxopropylideneamino)-6-(D-ribitylamino)uracil site is built by R116, Y174, and Q175. 7-hydroxy-6-methyl-8-(1-D-ribityl)lumazine-binding residues include R116, Y174, and Q175. 2 disulfide bridges follow: C120–C183 and C222–C278. An alpha-3 region spans residues 202–293; sequence EPPLVRVNRK…GVHVVLQVPQ (92 aa). In terms of domain architecture, Ig-like C1-type spans 203-282; it reads PPLVRVNRKE…SNLYSCHVEH (80 aa). A connecting peptide region spans residues 294–302; that stretch reads ESEAIPLVM. A helical membrane pass occupies residues 303–323; that stretch reads KAVSGSIVFVIVLAGVGVLVW. Topologically, residues 324–340 are cytoplasmic; the sequence is RRRPREQNGAVYLPTPD.

The protein belongs to the MHC class I family. In terms of assembly, heterotrimer that consists of MR1, B2M and metabolite antigen. Major classes of metabolite ligands presented by MR1 include riboflavin-related antigens, pyrimidines and ribityl lumazines, nucleobase adducts and folate derivatives. Forms reversible covalent Schiff base complexes with microbial pyrimidine-based metabolite, which serves as a molecular switch triggering complete folding, stable association with B2M and translocation of the ternary complex from endoplasmic reticulum to the plasma membrane. Alternatively, forms non-Schiff base complexes with ribityl lumazines. On antigen-presenting cells, the ternary complex interacts with TCR on MR1-restricted T cells. Interacts with TAPBP and TAPBPL chaperones in the endoplasmic reticulum. TAPBP associated or not with MHC class I peptide loading complex binds ligand-free MR1 or MR1-B2M complex, providing for stable MR1 pools ready for metabolite antigen processing. TAPBPL interacts with MR1 in a ligand-independent way; this interaction may stabilize MR1 pool and facilitate ligand loading and dissociation. Structurally, MR1-B2M heterodimer adopts a topology similar to classical MHC class I molecules, with alpha-1 and alpha-2 domains of MR1 forming the antigen-binding cleft composed of two alpha-helices resting on a floor of 7-stranded anti-parallel beta-pleated sheet. MR1-B2M heterodimer (via alpha-helices) interacts with TCR (via CDR domains). In terms of processing, N-glycosylated.

Its subcellular location is the cell membrane. The protein localises to the endoplasmic reticulum membrane. The protein resides in the golgi apparatus membrane. It is found in the early endosome membrane. It localises to the late endosome membrane. Antigen-presenting molecule specialized in displaying microbial pyrimidine-based metabolites to alpha-beta T cell receptors (TCR) on innate-type mucosal-associated invariant T (MAIT) cells. In complex with B2M preferentially presents riboflavin-derived metabolites to semi-invariant TCRs on MAIT cells, guiding immune surveillance of the microbial metabolome at mucosal epithelial barriers. Signature pyrimidine-based microbial antigens are generated via non-enzymatic condensation of metabolite intermediates of the riboflavin pathway with by-products arising from other metabolic pathways such as glycolysis. Typical potent antigenic metabolites are 5-(2-oxoethylideneamino)-6-D-ribitylaminouracil (5-OE-RU) and 5-(2-oxopropylideneamino)-6-D-ribitylaminouracil (5-OP-RU), products of condensation of 5-amino-6-D-ribityaminouracil (5-A-RU) with glyoxal or methylglyoxal by-products, respectively. May present microbial antigens to various MAIT cell subsets, providing for unique recognition of diverse microbes, including pathogens that do not synthesize riboflavin. Upon antigen recognition, elicits rapid innate-type MAIT cell activation to eliminate pathogenic microbes by directly killing infected cells. During T cell development, drives thymic selection and post-thymic terminal differentiation of MAIT cells in a process dependent on commensal microflora. Acts as an immune sensor of cancer cell metabolome. May present a tumor-specific or -associated metabolite essential for cancer cell survival to a pan-cancer TCR on a non-MAIT CD8-positive T cell clone, triggering T cell-mediated killing of a wide range of cancer cell types. May present tumor-enriched pyridoxal and pyridoxal 5'-phosphate antigens, enabling preferential recognition of cancer cells. Presents nucleobase carbonyl adducts generated during oxidative stress. Captures M3Ade, a nucleobase adduct composed of one adenine modified by a malondialdehyde trimer, for recognition by MR1-restricted T cell clones expressing a polyclonal TCR repertoire. The chain is Major histocompatibility complex class I-related protein 1 from Pongo abelii (Sumatran orangutan).